The following is a 434-amino-acid chain: BEN domain-containing protein 7 (434 aa).

Glycyl lysine isopeptide (Lys-Gly) (interchain with G-Cter in SUMO2) cross-links involve residues K16, K56, and K85. Disordered regions lie at residues 96 to 151 (PQRS…SNGE) and 212 to 262 (SRKR…ERTS). Residues 97 to 150 (QRSNSSTEASQGLHSNSRGAWNELPTQSGQFSGQSGPRSRTFQTQPHISASSNG) are compositionally biased toward polar residues. Positions 212-222 (SRKRNKKKKVL) are enriched in basic residues. A Glycyl lysine isopeptide (Lys-Gly) (interchain with G-Cter in SUMO2) cross-link involves residue K244. Positions 289–399 (GFDVFMPKSQ…RRLKRGSAEV (111 aa)) constitute a BEN domain. T326 is subject to Phosphothreonine. S330 is subject to Phosphoserine. The segment at 414 to 434 (TGHTFVIKRETPEDPEPGSVA) is disordered.

This is BEN domain-containing protein 7 (Bend7) from Mus musculus (Mouse).